The primary structure comprises 282 residues: Ribonuclease 3 (282 aa).

Residues 18 to 141 enclose the RNase III domain; sequence FVAFFKSLNI…LVAAIYEDLG (124 aa). Glu59 lines the Mg(2+) pocket. The active site involves Asp63. 2 residues coordinate Mg(2+): Asp127 and Glu130. Residue Glu130 is part of the active site.

It belongs to the ribonuclease III family. In terms of assembly, homodimer. Mg(2+) serves as cofactor.

It localises to the cytoplasm. The catalysed reaction is Endonucleolytic cleavage to 5'-phosphomonoester.. Functionally, digests double-stranded RNA. Involved in the processing of primary rRNA transcript to yield the immediate precursors to the large and small rRNAs (23S and 16S). Processes some mRNAs, and tRNAs when they are encoded in the rRNA operon. Processes pre-crRNA and tracrRNA of type II CRISPR loci if present in the organism. The polypeptide is Ribonuclease 3 (Mycoplasmoides pneumoniae (strain ATCC 15531 / DSM 23978 / CIP 103766 / NBRC 14401 / NCTC 10119 / FH) (Mycoplasma pneumoniae)).